The sequence spans 81 residues: MNVDHEVKLLVEEIHRLGSKNADGKLSVKFGVLFQDDKCANLFEALVGTLKAAKRRKIITYSGELLLQGVHDDVDIILLQD.

Methionine 1 carries the post-translational modification N-acetylmethionine.

It belongs to the costars family.

This is Costars family protein ABRACL (ABRACL) from Bos taurus (Bovine).